Consider the following 261-residue polypeptide: Protein OSB1, mitochondrial (261 aa).

A mitochondrion-targeting transit peptide spans 1–28; it reads MNTFFKLGSLIQRTASQISSSFPKSRFF. Residues 55-155 enclose the SSB domain; the sequence is VNSVSLMGFV…VKVAEVNYVA (101 aa). Positions 189-238 are PDF region; it reads WQVFFSNPYDWWDNRRNKKNPKQPDFKHKDTGEALWLCSDLPDWITRRLE.

In terms of tissue distribution, expressed in root elongation zone and in gametophytic cells.

The protein resides in the mitochondrion. Functionally, regulates mitochondrial DNA recombination. Represses homologous recombination, preventing mitochondrial genome instability and unbalanced transmission of alternative mtDNA configurations. Binds preferentially single-stranded DNA. Does not bind to RNA. The protein is Protein OSB1, mitochondrial (OSB1) of Arabidopsis thaliana (Mouse-ear cress).